The chain runs to 965 residues: MASNNVAQFAAELKMPAGVLLEQLQAAGVQKASEDDALSETDKARLLDHLRRSHGSNDADKRKITLTKRHTSEIKQSDATGKARTIQVEVRKKRTFVRRDEAAEQAAEATGNGQEAAEDLELQRREEEARHEAELLEKQAQELKARQEQLAREEAERQAREQAAEAERRRAEEEAAKKRAAAVAEAAAAAREQAEQERASQDEERAAAERAAQREAAKKAEDAAREQAEKARLEQEEIAKRRAKAEAEARAIREMMNTPRKAQVKAPEPPPKPAEAPKPAEAKGTLHKPARPAGETSARPAAKKPAPAAAAQPAATTQPAGPGGDKKKAGGKGGWQDDAAKRRGIKTRGDTSGGVDRGWRGGPKGRGKHQESTTFQAPTEPIVREVHVPETITVADLAHKMSVKASEVIKVMMKLGQMVTINQMLDQETAMIVVEELGHHAVAAKLDDPEAMLVEGEASDAPQLPRPPVVTVMGHVDHGKTSLLDYIRRAKVAAGEAGGITQHIGAYHVETPRGVITFLDTPGHEAFTAMRARGAKATDIVILVVAADDGVMPQTKEAISHAKAGGVPLVVAINKIDKPEANPERVKQELVAEGVVPEEYGGDSPFVPVSAKTGAGIDDLLENVLLQAEVLELKAPVEAPAKGLVIEAKLDKGKGPVATILVQSGTLNRGDVVLAGSAYGRVRAMLDETGKPTKAAGPSIPVEIQGLSEVPAAGEEVIVMPDDRKAREVALFRQGKFRDVKLAKQQAAKLENMLEQMGEGEVQYLPLIVKADVQGSQEALVQSLLKLSNDEVRVQIVHSAVGGISESDVNLATASKAVIIGFNTRADAQARKLAESNGIDIRYYNIIYDAVDEVKAAMSGMLAPEKREVVTGMVEVRQVFKVPKVGAVAGCMVTDGVVKRTSSVRVLRNNVVIHTGELDSLKRFKDDVKEVRQGFECGMSVKNFNDIMEGDQFEVFEVTEVARTL.

Residues 94-375 (RTFVRRDEAA…RGKHQESTTF (282 aa)) form a disordered region. Positions 104–115 (EQAAEATGNGQE) are enriched in low complexity. The span at 121–177 (ELQRREEEARHEAELLEKQAQELKARQEQLAREEAERQAREQAAEAERRRAEEEAAK) shows a compositional bias: basic and acidic residues. The span at 181 to 191 (AAVAEAAAAAR) shows a compositional bias: low complexity. Basic and acidic residues predominate over residues 192–253 (EQAEQERASQ…KAEAEARAIR (62 aa)). Positions 267–276 (PEPPPKPAEA) are enriched in pro residues. Over residues 303–320 (KKPAPAAAAQPAATTQPA) the composition is skewed to low complexity. Residues 351–364 (TSGGVDRGWRGGPK) show a composition bias toward gly residues. One can recognise a tr-type G domain in the interval 465-634 (PRPPVVTVMG…LLQAEVLELK (170 aa)). The tract at residues 474-481 (GHVDHGKT) is G1. Residue 474–481 (GHVDHGKT) coordinates GTP. The interval 499-503 (GITQH) is G2. A G3 region spans residues 520–523 (DTPG). Residues 520–524 (DTPGH) and 574–577 (NKID) contribute to the GTP site. Residues 574–577 (NKID) form a G4 region. The interval 610-612 (SAK) is G5.

It belongs to the TRAFAC class translation factor GTPase superfamily. Classic translation factor GTPase family. IF-2 subfamily.

The protein resides in the cytoplasm. Functionally, one of the essential components for the initiation of protein synthesis. Protects formylmethionyl-tRNA from spontaneous hydrolysis and promotes its binding to the 30S ribosomal subunits. Also involved in the hydrolysis of GTP during the formation of the 70S ribosomal complex. The sequence is that of Translation initiation factor IF-2 from Paraburkholderia phymatum (strain DSM 17167 / CIP 108236 / LMG 21445 / STM815) (Burkholderia phymatum).